A 3902-amino-acid polypeptide reads, in one-letter code: Mediator of RNA polymerase II transcription subunit 12 (3902 aa).

Disordered stretches follow at residues glutamate 414–proline 576, phenylalanine 619–leucine 674, alanine 694–leucine 940, valine 977–proline 1029, threonine 1812–arginine 1831, threonine 2463–glutamine 2675, alanine 2719–methionine 2771, arginine 2876–glutamine 3151, leucine 3195–glutamine 3549, and alanine 3563–tyrosine 3902. The segment covering glutamate 420–glutamate 430 has biased composition (acidic residues). A compositionally biased stretch (pro residues) spans proline 709–valine 721. Composition is skewed to basic and acidic residues over residues glutamate 740–asparagine 802, lysine 912–aspartate 928, valine 977–proline 1004, and lysine 1018–glutamate 1027. A compositionally biased stretch (basic residues) spans threonine 1812 to alanine 1824. Residues glutamine 2409–tyrosine 3902 form a required for nuclear localization region. Residues alanine 2474 to threonine 2547 are compositionally biased toward basic and acidic residues. Residues glutamate 2480–lysine 2526 are a coiled coil. Low complexity-rich tracts occupy residues alanine 2548–aspartate 2566, serine 2614–threonine 2632, and proline 2734–glycine 2748. The segment covering arginine 2876–arginine 2979 has biased composition (basic and acidic residues). Low complexity-rich tracts occupy residues glutamate 2980–glutamine 3001, glutamine 3010–proline 3143, glutamine 3196–glutamine 3205, and proline 3226–proline 3236. Residues glycine 3237 to arginine 3248 show a composition bias toward polar residues. Low complexity-rich tracts occupy residues alanine 3250–glycine 3275, glycine 3284–glycine 3295, and glycine 3317–glutamine 3389. Polar residues predominate over residues alanine 3391–glycine 3409. Composition is skewed to low complexity over residues glutamine 3410–asparagine 3446, glutamine 3454–glutamine 3539, and serine 3570–methionine 3619. Gly residues predominate over residues glycine 3620–serine 3649. Composition is skewed to low complexity over residues methionine 3663–histidine 3700, glutamine 3710–glutamine 3742, and glutamine 3760–glutamine 3830. Gly residues predominate over residues glycine 3831–glycine 3841. The segment covering glutamine 3842 to glutamine 3888 has biased composition (low complexity). Over residues histidine 3889–tyrosine 3902 the composition is skewed to polar residues.

The protein belongs to the Mediator complex subunit 12 family. In terms of assembly, component of the Mediator complex.

It localises to the nucleus. Component of the Mediator complex, a coactivator involved in regulated gene transcription of nearly all RNA polymerase II-dependent genes. Mediator functions as a bridge to convey information from gene-specific regulatory proteins to the basal RNA polymerase II transcription machinery. Mediator is recruited to promoters by direct interactions with regulatory proteins and serves as a scaffold for the assembly of a functional preinitiation complex with RNA polymerase II and the general transcription factors. The chain is Mediator of RNA polymerase II transcription subunit 12 (dpy-22) from Caenorhabditis briggsae.